Reading from the N-terminus, the 227-residue chain is Cytochrome c oxidase subunit 2 (227 aa).

The Mitochondrial intermembrane portion of the chain corresponds to 1 to 14; the sequence is MAYPFQLGLQDATS. A helical membrane pass occupies residues 15-45; it reads PIMEELLHFHDHTLMIVFLISSLVLYIISLM. Residues 46–59 lie on the Mitochondrial matrix side of the membrane; the sequence is LTTKLTHTSTMDAQ. A helical transmembrane segment spans residues 60-87; it reads EVETVWTILPAIILILIALPSLRILYMM. Residues 88–227 are Mitochondrial intermembrane-facing; the sequence is DEINNPSLTV…YFEAWSALMV (140 aa). The Cu cation site is built by His161, Cys196, Glu198, Cys200, His204, and Met207. Glu198 lines the Mg(2+) pocket. Tyr218 is subject to Phosphotyrosine.

The protein belongs to the cytochrome c oxidase subunit 2 family. Component of the cytochrome c oxidase (complex IV, CIV), a multisubunit enzyme composed of 14 subunits. The complex is composed of a catalytic core of 3 subunits MT-CO1, MT-CO2 and MT-CO3, encoded in the mitochondrial DNA, and 11 supernumerary subunits COX4I, COX5A, COX5B, COX6A, COX6B, COX6C, COX7A, COX7B, COX7C, COX8 and NDUFA4, which are encoded in the nuclear genome. The complex exists as a monomer or a dimer and forms supercomplexes (SCs) in the inner mitochondrial membrane with NADH-ubiquinone oxidoreductase (complex I, CI) and ubiquinol-cytochrome c oxidoreductase (cytochrome b-c1 complex, complex III, CIII), resulting in different assemblies (supercomplex SCI(1)III(2)IV(1) and megacomplex MCI(2)III(2)IV(2)). Found in a complex with TMEM177, COA6, COX18, COX20, SCO1 and SCO2. Interacts with TMEM177 in a COX20-dependent manner. Interacts with COX20. Interacts with COX16. Cu cation serves as cofactor.

Its subcellular location is the mitochondrion inner membrane. It catalyses the reaction 4 Fe(II)-[cytochrome c] + O2 + 8 H(+)(in) = 4 Fe(III)-[cytochrome c] + 2 H2O + 4 H(+)(out). Component of the cytochrome c oxidase, the last enzyme in the mitochondrial electron transport chain which drives oxidative phosphorylation. The respiratory chain contains 3 multisubunit complexes succinate dehydrogenase (complex II, CII), ubiquinol-cytochrome c oxidoreductase (cytochrome b-c1 complex, complex III, CIII) and cytochrome c oxidase (complex IV, CIV), that cooperate to transfer electrons derived from NADH and succinate to molecular oxygen, creating an electrochemical gradient over the inner membrane that drives transmembrane transport and the ATP synthase. Cytochrome c oxidase is the component of the respiratory chain that catalyzes the reduction of oxygen to water. Electrons originating from reduced cytochrome c in the intermembrane space (IMS) are transferred via the dinuclear copper A center (CU(A)) of subunit 2 and heme A of subunit 1 to the active site in subunit 1, a binuclear center (BNC) formed by heme A3 and copper B (CU(B)). The BNC reduces molecular oxygen to 2 water molecules using 4 electrons from cytochrome c in the IMS and 4 protons from the mitochondrial matrix. The sequence is that of Cytochrome c oxidase subunit 2 (MT-CO2) from Cuon alpinus (Dhole).